Reading from the N-terminus, the 1491-residue chain is Copper-transporting ATPase 1 (1491 aa).

The Cytoplasmic portion of the chain corresponds to 1 to 644 (MEPSVDANSI…KREIKQWRGS (644 aa)). 2 consecutive HMA domains span residues 8–74 (NSIT…FDAL) and 85–151 (TNTV…LDMG). The Cu(+) site is built by Thr-18, Cys-19, and Cys-22. A Phosphothreonine modification is found at Thr-152. The HMA 3 domain occupies 171–237 (VMLKMKVEGM…QIEAVGFPAF (67 aa)). Cu(+) is bound by residues Cys-182 and Cys-185. Ser-270 is subject to Phosphoserine. The 67-residue stretch at 277-343 (STTMFTIEGM…AIEAISPGQY (67 aa)) folds into the HMA 4 domain. The Cu(+) site is built by Cys-288 and Cys-291. Position 327 is a phosphothreonine (Thr-327). A phosphoserine mark is found at Ser-339, Ser-353, Ser-357, and Ser-362. HMA domains follow at residues 377-443 (QEAV…FDAA), 479-545 (NKCY…FGAM), and 555-621 (GILE…FEAS). Cys-388, Cys-391, Cys-490, Cys-493, Cys-566, and Cys-569 together coordinate Cu(+). Residues 645–666 (FLVSLFFCIPVMGLMVYMMVMD) traverse the membrane as a helical segment. The Extracellular portion of the chain corresponds to 667 to 705 (HHLATLHHNQNMSNEEMINMHSAMFLERQILPGLSIMNL). A glycan (N-linked (GlcNAc...) asparagine) is linked at Asn-677. The helical transmembrane segment at 706 to 725 (LSLLLCLPVQFCGGWYFYIQ) threads the bilayer. Over 726 to 732 (AYKALKH) the chain is Cytoplasmic. The chain crosses the membrane as a helical span at residues 733-753 (KTANMDVLIVLATTIAFAYSL). Residues 754–772 (VILLVAMFERAKVNPITFF) lie on the Extracellular side of the membrane. A helical membrane pass occupies residues 773–793 (DTPPMLFVFIALGRWLEHIAK). Topologically, residues 794–926 (GKTSEALAKL…SKAPIQQFAD (133 aa)) are cytoplasmic. A helical transmembrane segment spans residues 927–950 (KLSGYFVPFIVLVSIVTLLVWIII). Residues 951–980 (GFQNFEIVETYFPGYNRSISRTETIIRFAF) are Extracellular-facing. The N-linked (GlcNAc...) asparagine glycan is linked to Asn-966. Residues 981–1002 (QASITVLCIACPCSLGLATPTA) form a helical membrane-spanning segment. Residues 1003–1347 (VMVGTGVGAQ…LSRKTVKRIR (345 aa)) are Cytoplasmic-facing. Asp-1035 (4-aspartylphosphate intermediate) is an active-site residue. Glu-1072 is a binding site for ATP. Thr-1203 carries the post-translational modification Phosphothreonine. Mg(2+)-binding residues include Asp-1292 and Asp-1296. Residues 1348–1365 (INFVFALIYNLVGIPIAA) traverse the membrane as a helical segment. Over 1366–1376 (GVFLPIGLVLQ) the chain is Extracellular. The helical transmembrane segment at 1377–1396 (PWMGSAAMAASSVSVVLSSL) threads the bilayer. Residues 1397–1491 (FLKLYRKPTY…DFREDDDTTL (95 aa)) are Cytoplasmic-facing. 5 positions are modified to phosphoserine: Ser-1421, Ser-1423, Ser-1451, Ser-1454, and Ser-1457. An Endocytosis signal motif is present at residues 1458 to 1459 (LL). Residues Ser-1460, Ser-1464, Ser-1467, and Ser-1477 each carry the phosphoserine modification. Residues 1477 to 1491 (SLLVGDFREDDDTTL) are PDZD11-binding. Residues 1478–1479 (LL) carry the Endocytosis signal motif.

This sequence belongs to the cation transport ATPase (P-type) (TC 3.A.3) family. Type IB subfamily. In terms of assembly, monomer. Interacts with PDZD11. Interacts with ATOX1 and COMMD1. Interacts with TYRP1. Directly interacts with SOD3; this interaction is copper-dependent and is required for SOD3 activity. As to expression, widely expressed. Highly expressed in pituitary endocrine cells. Expressed in melanocytes (at protein level). Expressed in motor neuron (at protein level). Expressed in hippocampal neuron (at protein level). In the kidney, it is detected in the proximal and distal tubules (at protein level). Expressed in aorta (at protein level).

Its subcellular location is the golgi apparatus. The protein localises to the trans-Golgi network membrane. It localises to the cell membrane. It is found in the melanosome membrane. The protein resides in the early endosome membrane. Its subcellular location is the cell projection. The protein localises to the axon. It localises to the dendrite. It is found in the postsynaptic density. The enzyme catalyses Cu(+)(in) + ATP + H2O = Cu(+)(out) + ADP + phosphate + H(+). In terms of biological role, ATP-driven copper (Cu(+)) ion pump that plays an important role in intracellular copper ion homeostasis. Within a catalytic cycle, acquires Cu(+) ion from donor protein on the cytoplasmic side of the membrane and delivers it to acceptor protein on the lumenal side. The transfer of Cu(+) ion across the membrane is coupled to ATP hydrolysis and is associated with a transient phosphorylation that shifts the pump conformation from inward-facing to outward-facing state. Under physiological conditions, at low cytosolic copper concentration, it is localized at the trans-Golgi network (TGN) where it transfers Cu(+) ions to cuproenzymes of the secretory pathway. Upon elevated cytosolic copper concentrations, it relocalizes to the plasma membrane where it is responsible for the export of excess Cu(+) ions. May play a dual role in neuron function and survival by regulating cooper efflux and neuronal transmission at the synapse as well as by supplying Cu(+) ions to enzymes such as PAM, TYR and SOD3. In the melanosomes of pigmented cells, provides copper cofactor to TYR to form an active TYR holoenzyme for melanin biosynthesis. The sequence is that of Copper-transporting ATPase 1 from Mus musculus (Mouse).